A 136-amino-acid chain; its full sequence is MAKAIPITGSRRNVHVGSRKSSFRIQKGVIHVQTSFNNTIVAVTDIKGRVVSWSSAGTCGFKGTRRGTSFAAQIAATNAIRIVQGMQRAEVMIKGPGIGRDAVLRAIRGSGVLLTFVRDVTPMPHNGCRPPKKRRV.

The protein belongs to the universal ribosomal protein uS11 family. In terms of assembly, part of the 30S ribosomal subunit.

Its subcellular location is the plastid. The polypeptide is Small ribosomal subunit protein uS11c (Epifagus virginiana (Beechdrops)).